Consider the following 281-residue polypeptide: CCAAT/enhancer-binding protein epsilon (281 aa).

The segment at 1–30 (MSHGTYYECEPRGGQQPLEFSGGRAGPGEL) is disordered. Residue Lys-121 forms a Glycyl lysine isopeptide (Lys-Gly) (interchain with G-Cter in SUMO2) linkage. The residue at position 181 (Ser-181) is a Phosphoserine. The bZIP domain maps to 204-267 (SLEYRLRRER…DTLRNLFRQI (64 aa)). The basic motif stretch occupies residues 208–245 (RLRRERNNIAVRKSRDKAKRRIMETQQKVLEYMAENER). The tract at residues 246–267 (LRNRVDQLTQELDTLRNLFRQI) is leucine-zipper.

It belongs to the bZIP family. C/EBP subfamily. As to quaternary structure, binds DNA as a homodimer and as a heterodimer. Can form stable heterodimers with CEBPA, CEBPB and CEBPD. Interacts with GATA1 and SPI1. Interacts with SMARCD2. Post-translationally, phosphorylated.

The protein localises to the nucleus. Its function is as follows. Transcriptional activator. C/EBP are DNA-binding proteins that recognize two different motifs: the CCAAT homology common to many promoters and the enhanced core homology common to many enhancers. Required for the promyelocyte-myelocyte transition in myeloid differentiation. In Mus musculus (Mouse), this protein is CCAAT/enhancer-binding protein epsilon (Cebpe).